A 191-amino-acid polypeptide reads, in one-letter code: RRP15-like protein (191 aa).

Positions 1-11 (MSTKNRDRLVV) are enriched in basic and acidic residues. Positions 1-52 (MSTKNRDRLVVTEDSDDDNEREEMSSGGESGEEGPSSVDGGAGDADETVAFP) are disordered. Residues 53-84 (AIERRKKKVIKKLTKKEQSLKKSVKEYRIKLA) adopt a coiled-coil conformation. Residues 119-153 (QKTMSDAVKEKMTARERREARQRFDGKNFDSDRFA) are compositionally biased toward basic and acidic residues. The segment at 119–191 (QKTMSDAVKE…IDTGNYSDED (73 aa)) is disordered. Residues 166–191 (GEDDDGEDQMDIGEEQIDTGNYSDED) show a composition bias toward acidic residues.

Belongs to the RRP15 family.

The polypeptide is RRP15-like protein (Caenorhabditis elegans).